The sequence spans 215 residues: UPF0319 protein VV2_0960 (215 aa).

The first 21 residues, Met1–Ala21, serve as a signal peptide directing secretion.

The protein belongs to the UPF0319 family.

This Vibrio vulnificus (strain CMCP6) protein is UPF0319 protein VV2_0960.